Reading from the N-terminus, the 95-residue chain is Protein TusB (95 aa).

Belongs to the DsrH/TusB family. As to quaternary structure, heterohexamer, formed by a dimer of trimers. The hexameric TusBCD complex contains 2 copies each of TusB, TusC and TusD. The TusBCD complex interacts with TusE.

The protein resides in the cytoplasm. Its function is as follows. Part of a sulfur-relay system required for 2-thiolation of 5-methylaminomethyl-2-thiouridine (mnm(5)s(2)U) at tRNA wobble positions. This chain is Protein TusB, found in Pectobacterium atrosepticum (strain SCRI 1043 / ATCC BAA-672) (Erwinia carotovora subsp. atroseptica).